The sequence spans 144 residues: NADH-ubiquinone oxidoreductase chain 6 (144 aa).

5 helical membrane passes run 1–21 (MVKV…INID), 25–45 (SSFF…MSMH), 46–66 (IWFS…ILVY), 79–99 (YMAV…VLTY), and 108–128 (FYYS…LFFM).

Belongs to the complex I subunit 6 family.

It localises to the mitochondrion membrane. It carries out the reaction a ubiquinone + NADH + 5 H(+)(in) = a ubiquinol + NAD(+) + 4 H(+)(out). Its function is as follows. Core subunit of the mitochondrial membrane respiratory chain NADH dehydrogenase (Complex I) that is believed to belong to the minimal assembly required for catalysis. Complex I functions in the transfer of electrons from NADH to the respiratory chain. The immediate electron acceptor for the enzyme is believed to be ubiquinone. This is NADH-ubiquinone oxidoreductase chain 6 from Caenorhabditis elegans.